The primary structure comprises 196 residues: Interleukin-23 subunit alpha (196 aa).

An N-terminal signal peptide occupies residues 1 to 21 (MLDCRAIILLWLLPWATQGLA).

It belongs to the IL-6 superfamily. Heterodimer with IL12B; disulfide-linked. The heterodimer is known as interleukin IL-23. Interacts with IL23R; this interaction enables recruitment of IL12RB1.

It localises to the secreted. Functionally, associates with IL12B to form the pro-inflammatory cytokine IL-23 that plays different roles in innate and adaptive immunity. Released by antigen-presenting cells such as dendritic cells or macrophages, binds to a heterodimeric receptor complex composed of IL12RB1 and IL23R to activate JAK2 and TYK2 which then phosphorylate the receptor to form a docking site leading to the phosphorylation of STAT3 and STAT4. This process leads to activation of several pathways including p38 MAPK or NF-kappa-B and promotes the production of pro-inflammatory cytokines such as interleukin-17A/IL17A. In turn, participates in the early and effective intracellular bacterial clearance. Promotes the expansion and survival of T-helper 17 cells, a CD4-positive helper T-cell subset that produces IL-17, as well as other IL-17-producing cells. The chain is Interleukin-23 subunit alpha (Il23a) from Rattus norvegicus (Rat).